The following is a 154-amino-acid chain: Large ribosomal subunit protein uL13 (154 aa).

The protein belongs to the universal ribosomal protein uL13 family. In terms of assembly, part of the 50S ribosomal subunit.

This protein is one of the early assembly proteins of the 50S ribosomal subunit, although it is not seen to bind rRNA by itself. It is important during the early stages of 50S assembly. This chain is Large ribosomal subunit protein uL13, found in Cereibacter sphaeroides (strain ATCC 17029 / ATH 2.4.9) (Rhodobacter sphaeroides).